Consider the following 551-residue polypeptide: Seventh homolog of septin 1 (551 aa).

The residue at position 2 (Ser2) is an N-acetylserine. The Septin-type G domain maps to 20–339 (RGITYTMLLC…ENYRSEKLSS (320 aa)). The segment at 30 to 37 (GPAGTGKT) is G1 motif. Residues 30 to 37 (GPAGTGKT), Gly138, 218 to 226 (RADSFTKEE), and Arg288 contribute to the GTP site. The interval 135-138 (MTHG) is G3 motif. Residues 217 to 220 (TRAD) are G4 motif. Positions 381-417 (NLRADTPRNQVSGNFKENEYEDNGEHDSAENEQEMSP) are disordered. The residue at position 400 (Tyr400) is a Phosphotyrosine. Phosphoserine occurs at positions 408 and 416. The stretch at 418-518 (VRQLGREIKQ…KLINQNKLNG (101 aa)) forms a coiled coil. Residues Lys426 and Lys437 each participate in a glycyl lysine isopeptide (Lys-Gly) (interchain with G-Cter in SUMO) cross-link. Ser447, Ser460, Ser519, Ser520, Ser522, and Ser525 each carry phosphoserine. The disordered stretch occupies residues 515–551 (KLNGSSSSINSLQQSTRSQIKKNDTYTDLASIASGRD). The segment covering 519 to 532 (SSSSINSLQQSTRS) has biased composition (low complexity). Phosphothreonine is present on Thr539. Residues Ser545 and Ser548 each carry the phosphoserine modification.

This sequence belongs to the TRAFAC class TrmE-Era-EngA-EngB-Septin-like GTPase superfamily. Septin GTPase family. As to quaternary structure, component of the septin complex which consists of CDC3, CDC10, CDC11, CDC12 and probably SHS1 and rearranges to a cortical collar of highly ordered filaments at the mother-bud-neck. A complex formed by CDC3, CDC10, CDC11 and CDC12 is capable of forming long filaments in vitro and the components seem to be present in a 2:2:2:2 arrangement in vivo. The filaments are proposed to be formed by the end-to-end polymerization of CDC3-CDC12-CDC11 complexes with CDC10 serving as a bridge to bundle the polymers into paired filaments. Component of the GIN4 complex composed of at least BNI5, CDC3, CDC10, CDC11, CDC12, GIN4, NAP1 and SHS1. Self-associates. Interacts with CDC11 and SPA2. Phosphorylated by GIN4 and CLA4. Phosphorylation state is essential for septin ring dynamics during telophase. In terms of processing, sumoylated during mitosis on the mother cell side of the bud neck. Sumoylation probably plays a central role in regulating septin ring disassembly during the cell cycle.

It localises to the membrane. The protein resides in the bud neck. Its function is as follows. Septins are GTPases involved in cytokinesis that assemble early in the cell cycle as a patch at the incipient bud site and form a ring approximately 15 minutes before bud emergence, which transforms into an hour-glass shaped collar of cortical filaments that spans both sides of the mother-bud neck. This collar persists until just before cytokinesis, when it splits into two rings that occupy opposite sides of the neck. The septins at the bud neck serve as a structural scaffold that recruits different components involved in diverse processes at specific stages during the cell cycle. Many proteins bind asymmetrically to the septin collar. The septin assembly is regulated by protein kinases GIN4 and/or CLA4. May act by recruiting MYO1 and HOF1, a protein involved in septation, to the site of cleavage. Septins are also involved in cell morphogenesis, bud site selection, chitin deposition, cell cycle regulation, cell compartmentalization and spore wall formation. CDCd11 with SHS1 11 are involved in the recruitment of BNI5 and thereby ensure efficient localization at the bud neck of MYO1, the type II myosin of the actomyosin contractile ring. The protein is Seventh homolog of septin 1 of Saccharomyces cerevisiae (strain ATCC 204508 / S288c) (Baker's yeast).